A 297-amino-acid chain; its full sequence is Phosphate import ATP-binding protein PstB (297 aa).

One can recognise an ABC transporter domain in the interval Met50 to Ile292. Gly82–Ser89 provides a ligand contact to ATP.

This sequence belongs to the ABC transporter superfamily. Phosphate importer (TC 3.A.1.7) family. In terms of assembly, the complex is composed of two ATP-binding proteins (PstB), two transmembrane proteins (PstC and PstA) and a solute-binding protein (PstS).

The protein resides in the cell inner membrane. The catalysed reaction is phosphate(out) + ATP + H2O = ADP + 2 phosphate(in) + H(+). Functionally, part of the ABC transporter complex PstSACB involved in phosphate import. Responsible for energy coupling to the transport system. This is Phosphate import ATP-binding protein PstB from Alcanivorax borkumensis (strain ATCC 700651 / DSM 11573 / NCIMB 13689 / SK2).